Here is a 349-residue protein sequence, read N- to C-terminus: UDP-N-acetylenolpyruvoylglucosamine reductase (349 aa).

The 173-residue stretch at 25 to 197 (GIAARARFAA…VAVTFRLPKQ (173 aa)) folds into the FAD-binding PCMH-type domain. Arg-173 is a catalytic residue. Ser-249 serves as the catalytic Proton donor. Glu-345 is an active-site residue.

Belongs to the MurB family. The cofactor is FAD.

It localises to the cytoplasm. It catalyses the reaction UDP-N-acetyl-alpha-D-muramate + NADP(+) = UDP-N-acetyl-3-O-(1-carboxyvinyl)-alpha-D-glucosamine + NADPH + H(+). Its pathway is cell wall biogenesis; peptidoglycan biosynthesis. Its function is as follows. Cell wall formation. This Burkholderia orbicola (strain MC0-3) protein is UDP-N-acetylenolpyruvoylglucosamine reductase.